A 318-amino-acid chain; its full sequence is Potassium channel subfamily K member 15 (318 aa).

Residues 1–8 (MRKQSART) are Cytoplasmic-facing. Residues 9–29 (AALILCILSYLLVGAAVFDAL) traverse the membrane as a helical segment. Positions 80-101 (FAGSFYFAITVITTIGYGHAAP) form an intramembrane region, pore-forming. A helical membrane pass occupies residues 108-128 (VFCMFYALLGIPLTLVTFQSL). Topologically, residues 129–158 (GERLNALVRCLLLAAKRCLGLRRPHVSAEN) are cytoplasmic. Residues 159 to 179 (MVVAGLLLCAATLALGAAAFA) traverse the membrane as a helical segment. The pore-forming intramembrane region spans 189-209 (AYYYCFITLTTIGFGDFVALQ). The helical transmembrane segment at 223–243 (FSFLYILLGLTVIGAFLNLVV) threads the bilayer. Over 244 to 318 (LRFLASAEAP…DRLRARRKSI (75 aa)) the chain is Cytoplasmic. The tract at residues 296-318 (LSPEAVHDCHSSPDRLRARRKSI) is disordered. Residues 300–311 (AVHDCHSSPDRL) are compositionally biased toward basic and acidic residues.

This sequence belongs to the two pore domain potassium channel (TC 1.A.1.8) family. Heterodimer. Post-translationally, phosphorylated. Brain-specific. Highly expressed in auditory nuclei, in Purkinje cells and in olfactory bulb mitral cells.

It localises to the membrane. Probable potassium channel subunit. No channel activity observed in heterologous systems. May need to associate with another protein to form a functional channel. This Rattus norvegicus (Rat) protein is Potassium channel subfamily K member 15 (Kcnk15).